Consider the following 127-residue polypeptide: Protein chibby homolog 1 (127 aa).

A disordered region spans residues M1–H25. Phosphoserine occurs at positions 9 and 20. A minimal region for the interaction with PKD2 region spans residues V60–K112. Residues G68–H110 are a coiled coil. The segment at L77 to L98 is leucine-zipper; mediates homodimerization.

It belongs to the chibby family. Homodimer. Homodimerization is essential for nuclear localization and interaction with KPNA4 but is dispensable for interaction with CTNNB1. Interacts with polycystin-2/PKD2 and GM130. Interacts with the C-terminal region of CTNNB1. Interacts (C-terminus) with TCIM (C-terminus), TCIM competes with CTNNB1 for the interaction with CBY1. Interacts with FAM92A; this interaction facilitates targeting of FAM92A to cilium basal body. Interacts with CIBAR2. Interacts with KPNA4.

Its subcellular location is the nucleus speckle. The protein resides in the cytoplasm. It localises to the cytoskeleton. The protein localises to the cilium basal body. It is found in the microtubule organizing center. Its subcellular location is the centrosome. The protein resides in the centriole. It localises to the golgi apparatus. The protein localises to the trans-Golgi network. It is found in the cell projection. Its subcellular location is the cilium. The protein resides in the flagellum. It localises to the nucleus. Functionally, inhibits the Wnt/Wingless pathway by binding to CTNNB1/beta-catenin and inhibiting beta-catenin-mediated transcriptional activation through competition with TCF/LEF transcription factors. Has also been shown to play a role in regulating the intracellular trafficking of polycystin-2/PKD2 and possibly of other intracellular proteins. Promotes adipocyte and cardiomyocyte differentiation. The protein is Protein chibby homolog 1 (Cby1) of Rattus norvegicus (Rat).